The following is a 305-amino-acid chain: L-lactate dehydrogenase (305 aa).

NAD(+) is bound by residues Val-11, Asp-32, Lys-37, and Gly-76 to Val-77. Residues Gln-79, Arg-85, and Asn-117–Asp-120 each bind substrate. NAD(+)-binding positions include Ala-115–Asn-117 and Ser-140. Position 145 to 148 (Asp-145 to Arg-148) interacts with substrate. Beta-D-fructose 1,6-bisphosphate contacts are provided by Arg-150 and His-165. Residue His-172 is the Proton acceptor of the active site. The residue at position 218 (Tyr-218) is a Phosphotyrosine. Thr-227 contacts substrate.

It belongs to the LDH/MDH superfamily. LDH family. In terms of assembly, homotetramer.

Its subcellular location is the cytoplasm. The catalysed reaction is (S)-lactate + NAD(+) = pyruvate + NADH + H(+). It functions in the pathway fermentation; pyruvate fermentation to lactate; (S)-lactate from pyruvate: step 1/1. Allosterically activated by fructose 1,6-bisphosphate (FBP). Catalyzes the conversion of lactate to pyruvate. The protein is L-lactate dehydrogenase of Chloroherpeton thalassium (strain ATCC 35110 / GB-78).